Reading from the N-terminus, the 381-residue chain is E3 ubiquitin-protein ligase RNF133 (381 aa).

In terms of domain architecture, PA spans 65–167; it reads SSILKRVAGV…VKGMEILHLI (103 aa). The helical transmembrane segment at 186–208 threads the bilayer; sequence WLNHYFVSFMIVTTATLAYFTFY. Residues 256–297 form an RING-type; atypical zinc finger; the sequence is CVICFEAYKPNEIVRILTCKHFFHKNCIDPWILAHGTCPMCK. A disordered region spans residues 340-381; that stretch reads LPPARTSSKVTHVQEHPTSVNVGSQPPEAEETGHPSFGQHDL. Residues 344 to 363 show a composition bias toward polar residues; sequence RTSSKVTHVQEHPTSVNVGS.

As to quaternary structure, interacts with E3 ligase UBE2J1. Post-translationally, auto-ubiquitinated.

The protein resides in the endoplasmic reticulum membrane. The enzyme catalyses S-ubiquitinyl-[E2 ubiquitin-conjugating enzyme]-L-cysteine + [acceptor protein]-L-lysine = [E2 ubiquitin-conjugating enzyme]-L-cysteine + N(6)-ubiquitinyl-[acceptor protein]-L-lysine.. It functions in the pathway protein modification; protein ubiquitination. Its function is as follows. Has E3 ubiquitin-protein ligase activity. Plays a role in male fecundity through the interaction with the E2 ubituitin-protein ligase UBE2J1. This chain is E3 ubiquitin-protein ligase RNF133 (Rnf133), found in Rattus norvegicus (Rat).